We begin with the raw amino-acid sequence, 396 residues long: Tryptophan synthase beta chain (396 aa).

Lys86 carries the N6-(pyridoxal phosphate)lysine modification.

Belongs to the TrpB family. In terms of assembly, tetramer of two alpha and two beta chains. It depends on pyridoxal 5'-phosphate as a cofactor.

It catalyses the reaction (1S,2R)-1-C-(indol-3-yl)glycerol 3-phosphate + L-serine = D-glyceraldehyde 3-phosphate + L-tryptophan + H2O. It functions in the pathway amino-acid biosynthesis; L-tryptophan biosynthesis; L-tryptophan from chorismate: step 5/5. Its function is as follows. The beta subunit is responsible for the synthesis of L-tryptophan from indole and L-serine. In Aliivibrio salmonicida (strain LFI1238) (Vibrio salmonicida (strain LFI1238)), this protein is Tryptophan synthase beta chain.